Here is a 321-residue protein sequence, read N- to C-terminus: Ribosomal RNA small subunit methyltransferase H (321 aa).

Residues 40–42, Asp60, Phe84, Asp106, and Gln113 contribute to the S-adenosyl-L-methionine site; that span reads GGH.

It belongs to the methyltransferase superfamily. RsmH family.

The protein resides in the cytoplasm. The catalysed reaction is cytidine(1402) in 16S rRNA + S-adenosyl-L-methionine = N(4)-methylcytidine(1402) in 16S rRNA + S-adenosyl-L-homocysteine + H(+). In terms of biological role, specifically methylates the N4 position of cytidine in position 1402 (C1402) of 16S rRNA. This is Ribosomal RNA small subunit methyltransferase H from Histophilus somni (strain 2336) (Haemophilus somnus).